Here is a 385-residue protein sequence, read N- to C-terminus: Probable tRNA sulfurtransferase (385 aa).

Residues 57-160 (DGVIERVKKV…RGNAYVFTDK (104 aa)) enclose the THUMP domain. ATP contacts are provided by residues 180 to 181 (ML), 205 to 206 (YY), Arg-262, Gly-284, and Gln-293.

The protein belongs to the ThiI family.

The protein resides in the cytoplasm. It carries out the reaction [ThiI sulfur-carrier protein]-S-sulfanyl-L-cysteine + a uridine in tRNA + 2 reduced [2Fe-2S]-[ferredoxin] + ATP + H(+) = [ThiI sulfur-carrier protein]-L-cysteine + a 4-thiouridine in tRNA + 2 oxidized [2Fe-2S]-[ferredoxin] + AMP + diphosphate. It catalyses the reaction [ThiS sulfur-carrier protein]-C-terminal Gly-Gly-AMP + S-sulfanyl-L-cysteinyl-[cysteine desulfurase] + AH2 = [ThiS sulfur-carrier protein]-C-terminal-Gly-aminoethanethioate + L-cysteinyl-[cysteine desulfurase] + A + AMP + 2 H(+). Its pathway is cofactor biosynthesis; thiamine diphosphate biosynthesis. Functionally, catalyzes the ATP-dependent transfer of a sulfur to tRNA to produce 4-thiouridine in position 8 of tRNAs, which functions as a near-UV photosensor. Also catalyzes the transfer of sulfur to the sulfur carrier protein ThiS, forming ThiS-thiocarboxylate. This is a step in the synthesis of thiazole, in the thiamine biosynthesis pathway. The sulfur is donated as persulfide by IscS. The sequence is that of Probable tRNA sulfurtransferase from Clostridium perfringens (strain SM101 / Type A).